The sequence spans 469 residues: Aspartyl/glutamyl-tRNA(Asn/Gln) amidotransferase subunit B (469 aa).

This sequence belongs to the GatB/GatE family. GatB subfamily. In terms of assembly, heterotrimer of A, B and C subunits.

It carries out the reaction L-glutamyl-tRNA(Gln) + L-glutamine + ATP + H2O = L-glutaminyl-tRNA(Gln) + L-glutamate + ADP + phosphate + H(+). The enzyme catalyses L-aspartyl-tRNA(Asn) + L-glutamine + ATP + H2O = L-asparaginyl-tRNA(Asn) + L-glutamate + ADP + phosphate + 2 H(+). In terms of biological role, allows the formation of correctly charged Asn-tRNA(Asn) or Gln-tRNA(Gln) through the transamidation of misacylated Asp-tRNA(Asn) or Glu-tRNA(Gln) in organisms which lack either or both of asparaginyl-tRNA or glutaminyl-tRNA synthetases. The reaction takes place in the presence of glutamine and ATP through an activated phospho-Asp-tRNA(Asn) or phospho-Glu-tRNA(Gln). The polypeptide is Aspartyl/glutamyl-tRNA(Asn/Gln) amidotransferase subunit B (Thermus thermophilus (strain ATCC 27634 / DSM 579 / HB8)).